The primary structure comprises 606 residues: Isocitrate dehydrogenase kinase/phosphatase (606 aa).

Residues 354–360 and Lys-375 contribute to the ATP site; that span reads APGFKGT. Asp-414 is a catalytic residue.

This sequence belongs to the AceK family.

Its subcellular location is the cytoplasm. It carries out the reaction L-seryl-[isocitrate dehydrogenase] + ATP = O-phospho-L-seryl-[isocitrate dehydrogenase] + ADP + H(+). Bifunctional enzyme which can phosphorylate or dephosphorylate isocitrate dehydrogenase (IDH) on a specific serine residue. This is a regulatory mechanism which enables bacteria to bypass the Krebs cycle via the glyoxylate shunt in response to the source of carbon. When bacteria are grown on glucose, IDH is fully active and unphosphorylated, but when grown on acetate or ethanol, the activity of IDH declines drastically concomitant with its phosphorylation. This is Isocitrate dehydrogenase kinase/phosphatase from Rhodopseudomonas palustris (strain BisB5).